Consider the following 284-residue polypeptide: MGQSTLIRAKVGDRFSIGDGCPLTLFGGPCVIEGEDFSLKMAESIAKVCDRLGVQFVFKSSFDKANRTSIGSFRGYGLEEGLRILERVKTELGLPVLTDIHESQQAATVAEVVDILQIPAFLCRQTDLLLAAAATGRTVNVKKAQFLAPWDMKNVVNKLRQGGAENLLLTERGSCFGYNALVVDFRSLPLMRELGCPVVFDATHSVQIPGGAGDRSSGQREFVPVLARAAAAVGIDALFMEIHENPDQALSDGPNMIRLADLEATLRHILRVREAVAEPIGASA.

This sequence belongs to the KdsA family.

The protein resides in the cytoplasm. It catalyses the reaction D-arabinose 5-phosphate + phosphoenolpyruvate + H2O = 3-deoxy-alpha-D-manno-2-octulosonate-8-phosphate + phosphate. It functions in the pathway carbohydrate biosynthesis; 3-deoxy-D-manno-octulosonate biosynthesis; 3-deoxy-D-manno-octulosonate from D-ribulose 5-phosphate: step 2/3. It participates in bacterial outer membrane biogenesis; lipopolysaccharide biosynthesis. The protein is 2-dehydro-3-deoxyphosphooctonate aldolase of Synechococcus sp. (strain ATCC 27144 / PCC 6301 / SAUG 1402/1) (Anacystis nidulans).